Consider the following 211-residue polypeptide: ATP phosphoribosyltransferase (211 aa).

The protein belongs to the ATP phosphoribosyltransferase family. Short subfamily. As to quaternary structure, heteromultimer composed of HisG and HisZ subunits.

The protein resides in the cytoplasm. It carries out the reaction 1-(5-phospho-beta-D-ribosyl)-ATP + diphosphate = 5-phospho-alpha-D-ribose 1-diphosphate + ATP. The protein operates within amino-acid biosynthesis; L-histidine biosynthesis; L-histidine from 5-phospho-alpha-D-ribose 1-diphosphate: step 1/9. In terms of biological role, catalyzes the condensation of ATP and 5-phosphoribose 1-diphosphate to form N'-(5'-phosphoribosyl)-ATP (PR-ATP). Has a crucial role in the pathway because the rate of histidine biosynthesis seems to be controlled primarily by regulation of HisG enzymatic activity. This chain is ATP phosphoribosyltransferase, found in Bacillus cereus (strain ATCC 10987 / NRS 248).